The primary structure comprises 456 residues: Adenylosuccinate lyase (456 aa).

Residues 15–16 (RY), 90–92 (NHD), and 122–123 (TS) contribute to the N(6)-(1,2-dicarboxyethyl)-AMP site. His171 acts as the Proton donor/acceptor in catalysis. Gln247 contributes to the N(6)-(1,2-dicarboxyethyl)-AMP binding site. Ser295 (proton donor/acceptor) is an active-site residue. N(6)-(1,2-dicarboxyethyl)-AMP-binding positions include Ser296, 301 to 303 (KVN), Asn309, Arg335, and 340 to 344 (STVLR).

It belongs to the lyase 1 family. Adenylosuccinate lyase subfamily. In terms of assembly, homotetramer. Residues from neighboring subunits contribute catalytic and substrate-binding residues to each active site.

The catalysed reaction is N(6)-(1,2-dicarboxyethyl)-AMP = fumarate + AMP. It catalyses the reaction (2S)-2-[5-amino-1-(5-phospho-beta-D-ribosyl)imidazole-4-carboxamido]succinate = 5-amino-1-(5-phospho-beta-D-ribosyl)imidazole-4-carboxamide + fumarate. Its pathway is purine metabolism; AMP biosynthesis via de novo pathway; AMP from IMP: step 2/2. It functions in the pathway purine metabolism; IMP biosynthesis via de novo pathway; 5-amino-1-(5-phospho-D-ribosyl)imidazole-4-carboxamide from 5-amino-1-(5-phospho-D-ribosyl)imidazole-4-carboxylate: step 2/2. Its function is as follows. Catalyzes two reactions in de novo purine nucleotide biosynthesis. Catalyzes the breakdown of 5-aminoimidazole- (N-succinylocarboxamide) ribotide (SAICAR or 2-[5-amino-1-(5-phospho-beta-D-ribosyl)imidazole-4-carboxamido]succinate) to 5-aminoimidazole-4-carboxamide ribotide (AICAR or 5-amino-1-(5-phospho-beta-D-ribosyl)imidazole-4-carboxamide) and fumarate, and of adenylosuccinate (ADS or N(6)-(1,2-dicarboxyethyl)-AMP) to adenosine monophosphate (AMP) and fumarate. This Haemophilus influenzae (strain ATCC 51907 / DSM 11121 / KW20 / Rd) protein is Adenylosuccinate lyase (purB).